A 180-amino-acid polypeptide reads, in one-letter code: ATP-dependent protease subunit HslV (180 aa).

Thr-5 is an active-site residue. Na(+)-binding residues include Gly-165, Cys-168, and Thr-171.

It belongs to the peptidase T1B family. HslV subfamily. As to quaternary structure, a double ring-shaped homohexamer of HslV is capped on each side by a ring-shaped HslU homohexamer. The assembly of the HslU/HslV complex is dependent on binding of ATP.

It localises to the cytoplasm. The enzyme catalyses ATP-dependent cleavage of peptide bonds with broad specificity.. With respect to regulation, allosterically activated by HslU binding. Its function is as follows. Protease subunit of a proteasome-like degradation complex believed to be a general protein degrading machinery. The chain is ATP-dependent protease subunit HslV from Helicobacter pylori (strain P12).